A 378-amino-acid chain; its full sequence is Putative glutamate--cysteine ligase 2 (378 aa).

This sequence belongs to the glutamate--cysteine ligase type 2 family. YbdK subfamily.

The enzyme catalyses L-cysteine + L-glutamate + ATP = gamma-L-glutamyl-L-cysteine + ADP + phosphate + H(+). ATP-dependent carboxylate-amine ligase which exhibits weak glutamate--cysteine ligase activity. This is Putative glutamate--cysteine ligase 2 from Salinispora arenicola (strain CNS-205).